The following is a 281-amino-acid chain: Bifunctional protein FolD (281 aa).

NADP(+) is bound by residues 165–167, Thr192, and Val233; that span reads GRG.

It belongs to the tetrahydrofolate dehydrogenase/cyclohydrolase family. Homodimer.

The enzyme catalyses (6R)-5,10-methylene-5,6,7,8-tetrahydrofolate + NADP(+) = (6R)-5,10-methenyltetrahydrofolate + NADPH. It catalyses the reaction (6R)-5,10-methenyltetrahydrofolate + H2O = (6R)-10-formyltetrahydrofolate + H(+). The protein operates within one-carbon metabolism; tetrahydrofolate interconversion. In terms of biological role, catalyzes the oxidation of 5,10-methylenetetrahydrofolate to 5,10-methenyltetrahydrofolate and then the hydrolysis of 5,10-methenyltetrahydrofolate to 10-formyltetrahydrofolate. The sequence is that of Bifunctional protein FolD from Mycobacterium bovis (strain BCG / Tokyo 172 / ATCC 35737 / TMC 1019).